The sequence spans 235 residues: Orotidine 5'-phosphate decarboxylase (235 aa).

Substrate contacts are provided by residues D10, K33, 60-69 (DLKMHDIPNT), T123, R185, Q194, G214, and R215. K62 functions as the Proton donor in the catalytic mechanism.

This sequence belongs to the OMP decarboxylase family. Type 1 subfamily. Homodimer.

The enzyme catalyses orotidine 5'-phosphate + H(+) = UMP + CO2. It functions in the pathway pyrimidine metabolism; UMP biosynthesis via de novo pathway; UMP from orotate: step 2/2. Its function is as follows. Catalyzes the decarboxylation of orotidine 5'-monophosphate (OMP) to uridine 5'-monophosphate (UMP). The sequence is that of Orotidine 5'-phosphate decarboxylase from Lactobacillus acidophilus (strain ATCC 700396 / NCK56 / N2 / NCFM).